Consider the following 138-residue polypeptide: Putative pre-16S rRNA nuclease (138 aa).

This sequence belongs to the YqgF nuclease family.

The protein resides in the cytoplasm. Could be a nuclease involved in processing of the 5'-end of pre-16S rRNA. The sequence is that of Putative pre-16S rRNA nuclease from Helicobacter hepaticus (strain ATCC 51449 / 3B1).